The following is a 359-amino-acid chain: uncharacterized protein (359 aa).

Disordered stretches follow at residues 90-117 (QESPVRGMSPAPNGAKVPPRPHSEPSRK), 132-161 (IKKEEIKAKRPPSPPKACSTPGSCSSGMTS), and 235-359 (TSME…THRR). Residues 151–161 (TPGSCSSGMTS) show a composition bias toward polar residues. The span at 245 to 259 (KPPTVKSPPTVKLPP) shows a compositional bias: low complexity. Positions 286-299 (EENKEVPKEAEHKP) are enriched in basic and acidic residues.

This is an uncharacterized protein from Homo sapiens (Human).